The chain runs to 528 residues: Propionate catabolism operon regulatory protein (528 aa).

In terms of domain architecture, Sigma-54 factor interaction spans 218 to 461; it reads MLGQSPQMEQ…RNMMERLALF (244 aa). 318–327 contacts ATP; sequence AHGGTLFLDE. The segment at residues 508-527 is a DNA-binding region (H-T-H motif); that stretch reads KTAAANYLGISRTTFWRRLK.

In terms of biological role, involved in the transcriptional regulation of the propionate catabolism operon. The protein is Propionate catabolism operon regulatory protein (prpR) of Escherichia coli (strain K12).